The following is a 227-amino-acid chain: Uracil-DNA glycosylase (227 aa).

Catalysis depends on D68, which acts as the Proton acceptor.

This sequence belongs to the uracil-DNA glycosylase (UDG) superfamily. UNG family.

It localises to the cytoplasm. It carries out the reaction Hydrolyzes single-stranded DNA or mismatched double-stranded DNA and polynucleotides, releasing free uracil.. Excises uracil residues from the DNA which can arise as a result of misincorporation of dUMP residues by DNA polymerase or due to deamination of cytosine. The chain is Uracil-DNA glycosylase from Mycobacterium leprae (strain Br4923).